The chain runs to 1430 residues: MRDLLNLFKQPGAQLEDFDAIRIGLASPEMIRSWSYGEVKKPETINYRTFKPERDGLFCAKIFGPVKDYECLCGKYKRLKHRGVVCEKCGVEVTVAKVRRERMGHIDLASPVAHIWFLKSLPSRIGLLLDMTLRDVERVLYFEAYIVIEPGMTPLEQGQLLTDEQYLEAVEEHGDEFDARMGAEAVLEILKGMDLEAEARRLRDDIEATGSESKIKRLSKRLKLLEAFLESGNKPEWLIMTVLPVLPPDLRPLVPLDGGRFATSDLNDLYRRVINRNNRLKRLLELAAPDIIVRNEKRMLQESVDALLDNGRRGRAITGTNKRPLKSLADMIKGKQGRFRQNLLGKRVDYSGRSVIVVGPTLRLHQCGLPKRMALELFKPFIFSKLQRRGLATTIKAAKKMVERETGEVWDILDEVIREHPVLLNRAPTLHRLGIQAFEPVLIEGKAIQLHPLVCTAYNADFDGDQMAVHVPLSLEAQLESRAMMMSTNNILSPASGEPIIVPSQDVVLGIYYMTRERVNARGEGMRLAGVEEVHRAYQTGAAELGARVEVRIRERVFDDSGEMVERVQRRQTTIGRALLFDIVPDGLPFEAVDRELDKKGVSGLVNACYRRVGLKGTVVFADQLMYTGFFYSTKAGVSIGVDDMEVPTDKEEALRSAEEEVREIEDQYASGLVTSGERYNKVVDIWAHTNDQVAGAMMEKMGKETVVDAEGNETEQKSLNSIFIMADSGARGSAAQIRQLAGMRGLMAKPDGSIIETPITANFREGLNVLQYFISTHGARKGLADTALKTANSGYLTRRLVDVSQDLVVTEEDCGTTDGLVQTPIIEGGDVVETLAERVLGRVVAEDVAVPGSTDIAVEAGTLLDEDWVERLERMGVDEIKVRSAVTCETRHGVCAKCYGRDLARGHGVNIGEAVGVIAAQSIGEPGTQLTMRTFHIGGAASRAAAVSQVEVRNTGKARLHNIKTVQHHSGSYVAVSRSGELTVMDEYGRERERYKIPYGAVLSVGDEDPVEAGQVVANWDPHTHPIVTEVDGYVRFHDFVEGVTVQREVDEVTGLSSLVVTDPKSRGTGEHKRQVTNANGKVTEERVAYKDLRPMIKLVDGDGNDLNIAGTQIPAHYYLPAGAIVSLEDNAEVRVGDALARIPQEASKTRDITGGLPRVADLFEARKPKEPAILAEASGTVGFGKETKGKQRLIITKADGETHEELIPKWRNVTVFEGEHVEKGETIADGEPNPHDILRLLGVTKLAEYIVQEIQDVFRLQGVGINDKHIEVIVRQMLRKTIVSDPGDSLHLKGEQVDRAKLLEENEQLQAQDKQPAQWEPSLLGITKASLSTESFISAASFQETTRVLTEAATRGIRDDLRGLKENVIVGRLIPAGTGFAYHAARRQEAPAPAATPEQQAEEVFASLGQGEGEGPSPSDEASGPEVE.

Residues cysteine 71, cysteine 73, cysteine 86, and cysteine 89 each contribute to the Zn(2+) site. The Mg(2+) site is built by aspartate 461, aspartate 463, and aspartate 465. The Zn(2+) site is built by cysteine 815, cysteine 889, cysteine 896, and cysteine 899. The tract at residues 1388–1430 (RRQEAPAPAATPEQQAEEVFASLGQGEGEGPSPSDEASGPEVE) is disordered. The span at 1392 to 1405 (APAPAATPEQQAEE) shows a compositional bias: low complexity.

This sequence belongs to the RNA polymerase beta' chain family. In terms of assembly, the RNAP catalytic core consists of 2 alpha, 1 beta, 1 beta' and 1 omega subunit. When a sigma factor is associated with the core the holoenzyme is formed, which can initiate transcription. Mg(2+) serves as cofactor. The cofactor is Zn(2+).

It carries out the reaction RNA(n) + a ribonucleoside 5'-triphosphate = RNA(n+1) + diphosphate. In terms of biological role, DNA-dependent RNA polymerase catalyzes the transcription of DNA into RNA using the four ribonucleoside triphosphates as substrates. This is DNA-directed RNA polymerase subunit beta' from Halorhodospira halophila (strain DSM 244 / SL1) (Ectothiorhodospira halophila (strain DSM 244 / SL1)).